Here is a 267-residue protein sequence, read N- to C-terminus: 2-keto-3-deoxy-L-rhamnonate aldolase (267 aa).

The active-site Proton acceptor is H49. Q151 is a binding site for substrate. Residue E153 coordinates Mg(2+). The substrate site is built by A178 and D179. Residue D179 coordinates Mg(2+).

This sequence belongs to the HpcH/HpaI aldolase family. KDR aldolase subfamily. In terms of assembly, homohexamer. The cofactor is Mg(2+).

It carries out the reaction 2-dehydro-3-deoxy-L-rhamnonate = (S)-lactaldehyde + pyruvate. Catalyzes the reversible retro-aldol cleavage of 2-keto-3-deoxy-L-rhamnonate (KDR) to pyruvate and lactaldehyde. The polypeptide is 2-keto-3-deoxy-L-rhamnonate aldolase (Salmonella agona (strain SL483)).